Here is a 257-residue protein sequence, read N- to C-terminus: Acetylglutamate kinase (257 aa).

Substrate contacts are provided by residues 43–44 (GG), Arg-65, and Asn-157. ATP contacts are provided by residues 180-185 (DVSGIL) and 208-210 (IIT).

It belongs to the acetylglutamate kinase family. ArgB subfamily. Homodimer.

It is found in the cytoplasm. It carries out the reaction N-acetyl-L-glutamate + ATP = N-acetyl-L-glutamyl 5-phosphate + ADP. The protein operates within amino-acid biosynthesis; L-arginine biosynthesis; N(2)-acetyl-L-ornithine from L-glutamate: step 2/4. Catalyzes the ATP-dependent phosphorylation of N-acetyl-L-glutamate. This Serratia proteamaculans (strain 568) protein is Acetylglutamate kinase.